The following is a 153-amino-acid chain: Large ribosomal subunit protein uL13 (153 aa).

Belongs to the universal ribosomal protein uL13 family. In terms of assembly, part of the 50S ribosomal subunit.

In terms of biological role, this protein is one of the early assembly proteins of the 50S ribosomal subunit, although it is not seen to bind rRNA by itself. It is important during the early stages of 50S assembly. In Azorhizobium caulinodans (strain ATCC 43989 / DSM 5975 / JCM 20966 / LMG 6465 / NBRC 14845 / NCIMB 13405 / ORS 571), this protein is Large ribosomal subunit protein uL13.